The following is an 83-amino-acid chain: U-actitoxin-Aeq6b (83 aa).

The first 20 residues, 1–20 (MIYKAVFVCLVLVLLGDVFC), serve as a signal peptide directing secretion. Residues 21 to 36 (SPRNSGGGTLNDNPFE) constitute a propeptide that is removed on maturation. Position 82 is a proline amide (proline 82).

In terms of processing, contains 3 disulfide bonds. In terms of tissue distribution, expressed by acrorhagi.

The protein localises to the secreted. It localises to the nematocyst. Functionally, toxin. The chain is U-actitoxin-Aeq6b from Actinia equina (Beadlet anemone).